The chain runs to 152 residues: MATFSEEQEALVNSSWEAFSQNIPQLSIIFYTSILEKAPEAKAMFSFLKDSDGVPKDNLDLEAHCEKVFELTRNSALQLRAKGKVEVERIALKFLGYVHAQRRVLDPHFLVLKEALLKTLKEAMGDKWSEEVSNAWGIAYDELAGVIKKGMS.

A Globin domain is found at 3–152 (TFSEEQEALV…LAGVIKKGMS (150 aa)). At tyrosine 31 the chain carries Nitrated tyrosine. Serine 46 serves as a coordination point for heme b. Serine 46 carries the phosphoserine modification. Histidine 64 is a binding site for O2. Heme b-binding residues include lysine 67, histidine 99, and arginine 102. At tyrosine 140 the chain carries Nitrated tyrosine.

The protein belongs to the plant globin family. As to quaternary structure, monomer. In terms of processing, nitrated in effective nodules and particularly in hypoxic conditions; this mechanism may play a protective role in the symbiosis by buffering toxic peroxynitrite NO(2)(-). Nitration level decrease during nodule senescence. Post-translationally, phosphorylation at Ser-46 disrupts the molecular environment of its porphyrin ring oxygen binding pocket, thus leading to a reduced oxygen consumption and to the delivery of oxygen O(2) to symbiosomes. In terms of tissue distribution, mainly expressed in leaves and, at low levels, in roots of non-nodulated plants. However, accumulates also in nodules and roots, and, to a lower extent, in leaves, stems, flowers and fruits, in nodulated plants.

Its function is as follows. Atypical leghemoglobin that reversibly binds oxygen O(2) through a pentacoordinated heme iron. In nodules, facilitates the diffusion of oxygen to the bacteroids while preventing the bacterial nitrogenase from being inactivated by buffering dioxygen, nitric oxide and carbon monoxide. This role is essential for symbiotic nitrogen fixation (SNF). Seems not restricted to symbiotic nitrogen fixation and root nodules formation, but also contributes to general plant development and metabolism. In Lotus japonicus (Lotus corniculatus var. japonicus), this protein is Atypical leghemoglobin 2-1.